The following is a 460-amino-acid chain: tRNA (guanine(10)-N(2))-methyltransferase TRMT11 (460 aa).

The residue at position 2 (alanine 2) is an N-acetylalanine.

The protein belongs to the class I-like SAM-binding methyltransferase superfamily. TRM11 methyltransferase family. As to quaternary structure, part of the heterodimeric TRMT11-TRM112 methyltransferase complex; this complex forms an active tRNA methyltransferase, where TRMT112 acts as an activator of the catalytic subunit TRMT11.

The protein localises to the cytoplasm. The catalysed reaction is guanosine(10) in tRNA + S-adenosyl-L-methionine = N(2)-methylguanosine(10) in tRNA + S-adenosyl-L-homocysteine + H(+). Catalytic subunit of the TRMT11-TRM112 methyltransferase complex, that specifically mediates the S-adenosyl-L-methionine-dependent N(2)-methylation of guanosine nucleotide at position 10 (m2G10) in tRNAs. This is one of the major tRNA (guanine-N(2))-methyltransferases. The protein is tRNA (guanine(10)-N(2))-methyltransferase TRMT11 of Mus musculus (Mouse).